Consider the following 90-residue polypeptide: Putative membrane protein insertion efficiency factor (90 aa).

This sequence belongs to the UPF0161 family.

The protein localises to the cell membrane. In terms of biological role, could be involved in insertion of integral membrane proteins into the membrane. In Lactococcus lactis subsp. cremoris (strain SK11), this protein is Putative membrane protein insertion efficiency factor.